Reading from the N-terminus, the 371-residue chain is Nuclear hormone receptor family member nhr-51 (371 aa).

The nuclear receptor DNA-binding region spans 2 to 77 (NKNCLICHRK…MGMQAFPRRV (76 aa)). NR C4-type zinc fingers lie at residues 5-25 (CLICHRKAAGQHYGVLSCFAC) and 41-60 (CQKFNKCYEKFIILPKCKAC). An NR LBD domain is found at 98 to 337 (MDEQRHWRML…KQLVTDTFVD (240 aa)).

It belongs to the nuclear hormone receptor family.

Its subcellular location is the nucleus. In terms of biological role, orphan nuclear receptor. This Caenorhabditis elegans protein is Nuclear hormone receptor family member nhr-51 (nhr-51).